The sequence spans 327 residues: GMP reductase (327 aa).

The Thioimidate intermediate role is filled by Cys176. 205-228 (IIADGGIRTHGDIAKSIRFGASMV) provides a ligand contact to NADP(+).

The protein belongs to the IMPDH/GMPR family. GuaC type 2 subfamily.

The catalysed reaction is IMP + NH4(+) + NADP(+) = GMP + NADPH + 2 H(+). Its function is as follows. Catalyzes the irreversible NADPH-dependent deamination of GMP to IMP. It functions in the conversion of nucleobase, nucleoside and nucleotide derivatives of G to A nucleotides, and in maintaining the intracellular balance of A and G nucleotides. This is GMP reductase from Streptococcus pyogenes serotype M49 (strain NZ131).